The sequence spans 558 residues: Atlastin-1 (558 aa).

A disordered region spans residues 1 to 28 (MAKSRRDRNSWGGFSEKSSDWSSEEEEP). The segment at 1-34 (MAKSRRDRNSWGGFSEKSSDWSSEEEEPVRKAGP) is N-terminal hypervariable region (HVR). Residues 1–449 (MAKSRRDRNS…NIFHAARTPA (449 aa)) are Cytoplasmic-facing. 3 positions are modified to phosphoserine: Ser10, Ser22, and Ser23. The 246-residue stretch at 64-309 (DKEVVAVSVA…LIPWLLSPER (246 aa)) folds into the GB1/RHD3-type G domain. Arg77, Lys78, Gly79, Lys80, Ser81, Phe82, Gln148, Arg217, Asp218, Val276, and Asn279 together coordinate GDP. Arg77, Lys78, Gly79, Lys80, Ser81, and Phe82 together coordinate GTP. Ser81 lines the Mg(2+) pocket. Positions 217, 218, and 276 each coordinate GTP. The interval 347–438 (MLQATAEANN…YIQYIKHNDS (92 aa)) is 3HB (three-helix bundle) domain. Residue Lys395 is modified to N6-acetyllysine. The stretch at 412–439 (EFSRRYLQQLESEIDELYIQYIKHNDSK) forms a coiled coil. Positions 439 to 447 (KNIFHAART) are linker. A helical transmembrane segment spans residues 450–470 (TLFVVIFITYVIAGVTGFIGL). Residue Asp471 is a topological domain, lumenal. A helical membrane pass occupies residues 472–492 (IIASLCNMIMGLTLITLCTWA). The Cytoplasmic portion of the chain corresponds to 493–558 (YIRYSGEYRE…PTQQPEKKKI (66 aa)). The tract at residues 521 to 558 (NEALYKLYSAAATHRHLCHQAFPAPKSEPTQQPEKKKI) is autoinhibitory domain.

This sequence belongs to the TRAFAC class dynamin-like GTPase superfamily. GB1/RHD3 GTPase family. GB1 subfamily. In terms of assembly, monomeric and homodimeric. The homodimer, transiently formed by two molecules on opposing membranes, is the active form mediating ER membrane fusion. Interacts with REEP1, REEP5, RTN3 and RTN4 (via the transmembrane region); these proteins are involved in endoplasmic reticulum tubular network organization. Interacts with ZFYVE27; both proteins are involved in endoplasmic reticulum tubular network organization. Interacts with ARL6IP1; both proteins are involved in endoplasmic reticulum tubular network organization. Interacts with SPAST; the interaction is direct, could recruit SPAST to Golgi membranes. Interacts (via N-terminal region) with MAP4K4 (via CNH regulatory domain). May interact with TMED2. Interacts with CPT1C. Post-translationally, phosphorylated. Phosphorylation, by different kinases, of the N-terminal hypervariable region (HVR) regulates the ATL1-mediated membrane tethering step.

Its subcellular location is the endoplasmic reticulum membrane. The protein resides in the golgi apparatus membrane. It localises to the cell projection. It is found in the axon. The catalysed reaction is GTP + H2O = GDP + phosphate + H(+). Atlastin-1 (ATL1) is a membrane-anchored GTPase that mediates the GTP-dependent fusion of endoplasmic reticulum (ER) membranes, maintaining the continuous ER network. It facilitates the formation of three-way junctions where ER tubules intersect. Two atlastin-1 on neighboring ER tubules bind GTP and form loose homodimers through the GB1/RHD3-type G domains and 3HB regions. Upon GTP hydrolysis, the 3HB regions tighten, pulling the membranes together to drive their fusion. After fusion, the homodimer disassembles upon release of inorganic phosphate (Pi). Subsequently, GDP dissociates, resetting the monomers to a conformation ready for a new fusion cycle. May also regulate more or less directly Golgi biogenesis. Indirectly regulates axonal development. The chain is Atlastin-1 from Mus musculus (Mouse).